Here is a 500-residue protein sequence, read N- to C-terminus: NAD(P)H-quinone oxidoreductase chain 4, chloroplastic (500 aa).

The next 14 helical transmembrane spans lie at Phe-4 to Leu-24, Met-37 to Leu-57, Leu-87 to Val-107, Leu-113 to Ser-130, Leu-134 to Met-154, Phe-167 to Leu-187, Ile-211 to His-231, His-242 to Ile-262, Ala-272 to Ala-292, Met-313 to Leu-333, Gln-334 to Asp-354, Leu-386 to Thr-406, Leu-417 to Leu-437, and Leu-462 to Val-482.

It belongs to the complex I subunit 4 family.

The protein resides in the plastid. It is found in the chloroplast thylakoid membrane. It carries out the reaction a plastoquinone + NADH + (n+1) H(+)(in) = a plastoquinol + NAD(+) + n H(+)(out). It catalyses the reaction a plastoquinone + NADPH + (n+1) H(+)(in) = a plastoquinol + NADP(+) + n H(+)(out). The protein is NAD(P)H-quinone oxidoreductase chain 4, chloroplastic of Oryza nivara (Indian wild rice).